The chain runs to 30 residues: QDYCAQEGQQEVQRKDLSDLERYLRQSRQR.

The protein belongs to the 2S seed storage albumins family. In terms of assembly, the mature protein is a heterodimer of a small and a large chain linked by 2 disulfide bonds. As to expression, extracted from castor bean.

Its function is as follows. This is a 2S seed storage protein. Inhibits spore germination in R.solani and F.oxysporum. Exhibits anti-trypsin activity. This is 2S seed storage-like protein from Ricinus communis (Castor bean).